The sequence spans 342 residues: Serpentine receptor class delta-33 (342 aa).

7 consecutive transmembrane segments (helical) span residues 26–46 (IFVI…LLLL), 62–82 (IFLA…VTSM), 112–132 (YVGI…SMIY), 148–168 (IILC…CSNI), 205–225 (LIIL…VMYW), 261–281 (IIPL…QLGF), and 287–307 (YSYF…VVTI).

Belongs to the nematode receptor-like protein srd family.

It localises to the membrane. This Caenorhabditis elegans protein is Serpentine receptor class delta-33 (srd-33).